We begin with the raw amino-acid sequence, 216 residues long: Type-4 uracil-DNA glycosylase (216 aa).

Residues cysteine 14 and cysteine 17 each coordinate [4Fe-4S] cluster. Residues 41-43, phenylalanine 55, and asparagine 82 each bind uracil; that span reads GEA. [4Fe-4S] cluster-binding residues include cysteine 86 and cysteine 102. Position 164 (histidine 164) interacts with uracil.

Belongs to the uracil-DNA glycosylase (UDG) superfamily. Type 4 (UDGa) family. In terms of assembly, interacts with the sliding clamp PCNA3 subunit.

The catalysed reaction is Hydrolyzes single-stranded DNA or mismatched double-stranded DNA and polynucleotides, releasing free uracil.. Removes uracil bases that are present in DNA as a result of either deamination of cytosine or misincorporation of dUMP instead of dTMP. Can remove uracil from double-stranded DNA containing either a U/G or U/A base pair as well as from single-stranded DNA. The protein is Type-4 uracil-DNA glycosylase of Saccharolobus solfataricus (strain ATCC 35092 / DSM 1617 / JCM 11322 / P2) (Sulfolobus solfataricus).